The chain runs to 245 residues: E3 ubiquitin-protein ligase RNF138 (245 aa).

Alanine 2 carries the post-translational modification N-acetylalanine. An RING-type zinc finger spans residues 18 to 58; sequence CPVCQEVLKTPVRTTACQHVFCRKCFLTAMRESGAHCPLCR. Cysteine 86, cysteine 89, histidine 101, and cysteine 105 together coordinate Zn(2+). A C2HC RNF-type zinc finger spans residues 86–105; sequence CRCCAKQIKFYRMRHHYKSC. Residues 125–154 are disordered; that stretch reads QDSVGNSNRSETSTSDNTETYQENTSSSGH. Phosphothreonine is present on threonine 142. C2H2-type zinc fingers lie at residues 157 to 180 and 187 to 215; these read FKCP…NSNH and VTCP…NQRH. The UIM domain maps to 225–243; that stretch reads LQLDEETQYQTAVEESFQV.

Interacts with NLK. Interacts with XRCC5/Ku80. Interacts with RBBP8/CtIP. Auto-ubiquitinated.

The protein localises to the chromosome. It carries out the reaction S-ubiquitinyl-[E2 ubiquitin-conjugating enzyme]-L-cysteine + [acceptor protein]-L-lysine = [E2 ubiquitin-conjugating enzyme]-L-cysteine + N(6)-ubiquitinyl-[acceptor protein]-L-lysine.. Its pathway is protein modification; protein ubiquitination. Functionally, E3 ubiquitin-protein ligase involved in DNA damage response by promoting DNA resection and homologous recombination. Recruited to sites of double-strand breaks following DNA damage and specifically promotes double-strand break repair via homologous recombination. Two different, non-exclusive, mechanisms have been proposed. According to a report, regulates the choice of double-strand break repair by favoring homologous recombination over non-homologous end joining (NHEJ): acts by mediating ubiquitination of XRCC5/Ku80, leading to remove the Ku complex from DNA breaks, thereby promoting homologous recombination. According to another report, cooperates with UBE2Ds E2 ubiquitin ligases (UBE2D1, UBE2D2, UBE2D3 or UBE2D4) to promote homologous recombination by mediating ubiquitination of RBBP8/CtIP. Together with NLK, involved in the ubiquitination and degradation of TCF/LEF. Also exhibits auto-ubiquitination activity in combination with UBE2K. May act as a negative regulator in the Wnt/beta-catenin-mediated signaling pathway. This chain is E3 ubiquitin-protein ligase RNF138, found in Homo sapiens (Human).